The sequence spans 145 residues: Transcriptional regulator SlyA (145 aa).

Positions 2 to 135 (ELPLGSDLAR…LALLVARLEK (134 aa)) constitute an HTH marR-type domain. Positions 49 to 72 (QIQLAKAIGIEQPSLVRTLDQLEE) form a DNA-binding region, H-T-H motif.

The protein belongs to the SlyA family. In terms of assembly, homodimer.

Its function is as follows. Transcription regulator that can specifically activate or repress expression of target genes. The chain is Transcriptional regulator SlyA from Pectobacterium carotovorum subsp. carotovorum (strain PC1).